An 81-amino-acid polypeptide reads, in one-letter code: Cytotoxin 4N (81 aa).

Positions 1–21 (MKTLLLTLVVVTIVCLDLGYT) are cleaved as a signal peptide. Intrachain disulfides connect Cys24–Cys42, Cys35–Cys59, Cys63–Cys74, and Cys75–Cys80.

The protein belongs to the three-finger toxin family. Short-chain subfamily. Type IA cytotoxin sub-subfamily. Monomer in solution; Homodimer and oligomer in the presence of negatively charged lipids forming a pore with a size ranging between 20 and 30 Angstroms. As to expression, expressed by the venom gland.

It localises to the secreted. The protein resides in the target cell membrane. Functionally, shows cytolytic activity on many different cells by forming pore in lipid membranes. In vivo, increases heart rate or kills the animal by cardiac arrest. In addition, it binds to heparin with high affinity, interacts with Kv channel-interacting protein 1 (KCNIP1) in a calcium-independent manner, and binds to integrin alpha-V/beta-3 (ITGAV/ITGB3) with moderate affinity. This is Cytotoxin 4N from Naja atra (Chinese cobra).